Here is a 464-residue protein sequence, read N- to C-terminus: uncharacterized protein (464 aa).

12 helical membrane passes run 7-27 (VLNV…LRTL), 37-57 (LVFY…LVAA), 94-114 (VVWY…LIAP), 121-141 (FYLL…NCFG), 153-173 (ASIG…VWIF), 196-216 (LSLF…AVHA), 231-251 (FYSA…IVIV), 282-302 (VIAV…IIGP), 329-349 (VAIL…FILL), 359-379 (LSDL…AAAI), 401-421 (MSLI…VGFI), and 432-452 (FLFE…PWLF).

It belongs to the amino acid-polyamine-organocation (APC) superfamily.

It localises to the cell membrane. This is an uncharacterized protein from Legionella pneumophila subsp. pneumophila (strain Philadelphia 1 / ATCC 33152 / DSM 7513).